A 653-amino-acid polypeptide reads, in one-letter code: MAIDGYLWMVILGFIIAFILAFSVGANDVANSFGTAVGSGVVTLRQACILASIFETTGSVLLGAKVGETIRKGIIDVNLYNETVETLMAGEVSAMVGSAVWQLIASFLRLPISGTHCIVGSTIGFSLVAIGTQGVQWMELVKIVASWFISPLLSGFMSGVLFILIRIFILKKEDPVPNGLRALPVFYAATIAINVFSIMYTGAPVLGLVLPIWAIALISFGVALLFALFVWLFVCPWMRRKIAGKLQKEAALSRVSDESLSKIQEVESPVFKELPGAKANDDSTVPLTGSAGEPSGTSEGTSVGNHPRASYGRALSMTHGSAKSPVSNGTFGFDGHTRSDGHVYHTVHKDSGLYKDLLHRIHSDRGPEERPAQENNYRFLRRNNSYTCYTAAICGMPVHSTFKAADSSSAPEDSEKLVGDAVSYSKKRLRYDSYSSYCNAVAEAEIEADEGGVEMKLASELTDPDQPRDDPAEEEKEEKDTAEVHLLFHFLQVLTACFGSFAHGGNDVSNAIGPLVALWLIYEQGAVLQEAVTPVWLLFYGGVGICTGLWVWGRRVIQTMGKDLTPITPSSGFTIELASAFTVVIASNVGLPVSTTHCKVGSVVAVGWIRSRKAVDWRLFRNIFVAWFVTVPVAGLFSAAIMALLMYGILPYV.

Residues 1-5 are Extracellular-facing; that stretch reads MAIDG. A helical membrane pass occupies residues 6–26; the sequence is YLWMVILGFIIAFILAFSVGA. Residues 27–46 lie on the Cytoplasmic side of the membrane; that stretch reads NDVANSFGTAVGSGVVTLRQ. The chain crosses the membrane as a helical span at residues 47–67; that stretch reads ACILASIFETTGSVLLGAKVG. The Extracellular portion of the chain corresponds to 68-86; the sequence is ETIRKGIIDVNLYNETVET. A glycan (N-linked (GlcNAc...) asparagine) is linked at N81. Residues 87-107 form a helical membrane-spanning segment; it reads LMAGEVSAMVGSAVWQLIASF. The Cytoplasmic portion of the chain corresponds to 108 to 109; that stretch reads LR. Residues 110–130 form a helical membrane-spanning segment; it reads LPISGTHCIVGSTIGFSLVAI. Over 131-142 the chain is Extracellular; sequence GTQGVQWMELVK. The chain crosses the membrane as a helical span at residues 143–163; that stretch reads IVASWFISPLLSGFMSGVLFI. Over 164 to 190 the chain is Cytoplasmic; it reads LIRIFILKKEDPVPNGLRALPVFYAAT. A helical transmembrane segment spans residues 191 to 211; the sequence is IAINVFSIMYTGAPVLGLVLP. The Extracellular portion of the chain corresponds to 212–213; it reads IW. The helical transmembrane segment at 214–234 threads the bilayer; it reads AIALISFGVALLFALFVWLFV. The Cytoplasmic segment spans residues 235–483; the sequence is CPWMRRKIAG…EEKEEKDTAE (249 aa). A phosphoserine mark is found at S253, S256, S259, and S268. The tract at residues 275–311 is disordered; sequence PGAKANDDSTVPLTGSAGEPSGTSEGTSVGNHPRASY. The segment covering 295–304 has biased composition (polar residues); sequence SGTSEGTSVG. S316 and S385 each carry phosphoserine. Residues 459–478 are disordered; it reads SELTDPDQPRDDPAEEEKEE. The chain crosses the membrane as a helical span at residues 484–504; it reads VHLLFHFLQVLTACFGSFAHG. Topologically, residues 505-531 are extracellular; sequence GNDVSNAIGPLVALWLIYEQGAVLQEA. The chain crosses the membrane as a helical span at residues 532-552; sequence VTPVWLLFYGGVGICTGLWVW. Residues 553–572 lie on the Cytoplasmic side of the membrane; the sequence is GRRVIQTMGKDLTPITPSSG. Residues 573–587 form a helical membrane-spanning segment; that stretch reads FTIELASAFTVVIAS. Topologically, residues 588-594 are extracellular; it reads NVGLPVS. The helical transmembrane segment at 595–610 threads the bilayer; sequence TTHCKVGSVVAVGWIR. Over 611–622 the chain is Cytoplasmic; that stretch reads SRKAVDWRLFRN. A helical transmembrane segment spans residues 623–643; that stretch reads IFVAWFVTVPVAGLFSAAIMA. Over 644–653 the chain is Extracellular; it reads LLMYGILPYV.

It belongs to the inorganic phosphate transporter (PiT) (TC 2.A.20) family. Homodimer.

It localises to the cell membrane. Its subcellular location is the apical cell membrane. It carries out the reaction 2 Na(+)(out) + phosphate(out) = 2 Na(+)(in) + phosphate(in). In terms of biological role, sodium-phosphate symporter which preferentially transports the monovalent form of phosphate with a stoichiometry of two sodium ions per phosphate ion. Plays a critical role in the determination of bone quality and strength by providing phosphate for bone mineralization. Required to maintain normal cerebrospinal fluid phosphate levels. Mediates phosphate-induced calcification of vascular smooth muscle cells (VCMCs) and can functionally compensate for loss of SLC20A1 in VCMCs. Its function is as follows. (Microbial infection) Functions as a retroviral receptor for feline leukemia virus subgroup B (FeLV-B). The polypeptide is Sodium-dependent phosphate transporter 2 (SLC20A2) (Felis catus (Cat)).